Here is a 240-residue protein sequence, read N- to C-terminus: uncharacterized protein (240 aa).

Disordered stretches follow at residues 99 to 121 (EPPTVSAPPPPSQFSDEPTSPEL) and 136 to 167 (ATVSSPTSPRPITTESSRVSPTKEKWGRKRVH). The span at 137-155 (TVSSPTSPRPITTESSRVS) shows a compositional bias: polar residues.

This is an uncharacterized protein from Ictaluridae (bullhead catfishes).